A 262-amino-acid polypeptide reads, in one-letter code: Type III pantothenate kinase (262 aa).

Residue 6-13 (DVGNTNAV) participates in ATP binding. Substrate is bound by residues Tyr100 and 107 to 110 (GADR). The Proton acceptor role is filled by Asp109. Residue Asp129 participates in K(+) binding. Thr132 lines the ATP pocket. Thr184 lines the substrate pocket.

It belongs to the type III pantothenate kinase family. In terms of assembly, homodimer. NH4(+) is required as a cofactor. Requires K(+) as cofactor.

It is found in the cytoplasm. The catalysed reaction is (R)-pantothenate + ATP = (R)-4'-phosphopantothenate + ADP + H(+). The protein operates within cofactor biosynthesis; coenzyme A biosynthesis; CoA from (R)-pantothenate: step 1/5. Catalyzes the phosphorylation of pantothenate (Pan), the first step in CoA biosynthesis. The sequence is that of Type III pantothenate kinase from Bacillus cereus (strain G9842).